The following is a 524-amino-acid chain: Protein-export membrane protein SecD (524 aa).

6 consecutive transmembrane segments (helical) span residues 10 to 30, 366 to 386, 389 to 409, 420 to 442, 465 to 485, and 487 to 507; these read VIFL…PTMG, KFDS…VVFI, GKPQ…YILL, DLSV…IIIA, FWVI…LAVL, and LGDL…GVLV.

It belongs to the SecD/SecF family. SecD subfamily. Part of the protein translocation apparatus. Forms a homodimer and complexes with SecF.

It is found in the cell membrane. In terms of biological role, involved in protein export. The protein is Protein-export membrane protein SecD of Haloferax volcanii (strain ATCC 29605 / DSM 3757 / JCM 8879 / NBRC 14742 / NCIMB 2012 / VKM B-1768 / DS2) (Halobacterium volcanii).